A 333-amino-acid polypeptide reads, in one-letter code: Serine racemase (333 aa).

A Mg(2+)-binding site is contributed by Glu-13. ATP contacts are provided by Ser-31, Ser-32, Ile-33, Lys-51, and Thr-52. Residue Lys-56 is the Proton acceptor of the active site. Residue Lys-56 is modified to N6-(pyridoxal phosphate)lysine. Position 69 (Pro-69) interacts with Ca(2+). Position 71 is a phosphothreonine (Thr-71). Thr-81 lines the Ca(2+) pocket. Catalysis depends on Ser-84, which acts as the Proton acceptor. Asn-86 provides a ligand contact to pyridoxal 5'-phosphate. Gln-89 serves as a coordination point for ATP. Position 113 is an S-nitrosocysteine (Cys-113). Position 121 (Tyr-121) interacts with ATP. Asn-154 lines the pyridoxal 5'-phosphate pocket. Asp-178 lines the Mg(2+) pocket. Pyridoxal 5'-phosphate contacts are provided by Gly-185, Gly-186, Gly-187, Gly-188, and Met-189. Mg(2+) is bound by residues Glu-210, Ala-214, Asp-216, and Asn-247. Residues Glu-210, Ala-214, Asp-216, and Asn-247 each contribute to the Ca(2+) site. 3 residues coordinate Mn(2+): Glu-210, Ala-214, and Asp-216. Lys-279 lines the ATP pocket. Ser-313 is a pyridoxal 5'-phosphate binding site. Asn-316 provides a ligand contact to ATP.

The protein belongs to the serine/threonine dehydratase family. As to quaternary structure, homodimer. Requires Mg(2+) as cofactor. The cofactor is Mn(2+). It depends on Ca(2+) as a cofactor. Pyridoxal 5'-phosphate is required as a cofactor. In terms of processing, S-nitrosylated, leading to decrease the enzyme activity. As to expression, expressed in the cerebellum and frontal cortex (at protein level).

The catalysed reaction is L-serine = D-serine. It carries out the reaction D-serine = pyruvate + NH4(+). The enzyme catalyses L-serine = pyruvate + NH4(+). With respect to regulation, allosterically activated by magnesium, and possibly also other divalent metal cations. Allosterically activated by ATP, ADP or GTP. Competitively inhibited by malonate. Catalyzes the synthesis of D-serine from L-serine. D-serine is a key coagonist with glutamate at NMDA receptors. Has dehydratase activity towards both L-serine and D-serine. This is Serine racemase (Srr) from Rattus norvegicus (Rat).